The primary structure comprises 491 residues: Nucleoside transporter 1.2 (491 aa).

A run of 6 helical transmembrane segments spans residues 27–47 (FYVY…VNAV), 82–102 (YNLI…LSWF), 109–129 (VRLL…MVVP), 136–156 (AGAV…KSIF), 173–193 (STMM…QIIV), and 209–229 (KIYY…LILL). Over residues 261–273 (HTDEHPTHDKEGR) the composition is skewed to basic and acidic residues. Disordered regions lie at residues 261–280 (HTDE…SGKE) and 290–309 (AAAK…PHEV). Asn274 is a glycosylation site (N-linked (GlcNAc...) asparagine). 5 consecutive transmembrane segments (helical) span residues 333 to 353 (MFVA…GIAV), 361 to 381 (WFST…RFSP), 395 to 415 (WIIV…LLHS), 427 to 447 (VMEV…LVLG), and 460 to 480 (FVAG…GTVL).

The protein belongs to the SLC29A/ENT transporter (TC 2.A.57) family.

The protein localises to the membrane. It catalyses the reaction adenosine(in) + H(+)(in) = adenosine(out) + H(+)(out). The enzyme catalyses uridine(in) + H(+)(in) = uridine(out) + H(+)(out). Its function is as follows. Sodium-independent nucleoside:H(+) symporter; transports adenosine with high affinity and uridine with moderate affinity. Can transport cytidine and thymidine. In Leishmania donovani, this protein is Nucleoside transporter 1.2.